The sequence spans 317 residues: Adenosine receptor A3 (317 aa).

The Extracellular portion of the chain corresponds to 1–14 (MPVNSTAVSWTSVT). N-linked (GlcNAc...) asparagine glycosylation occurs at N4. A helical transmembrane segment spans residues 15–37 (YITVEILIGLCAIVGNVLVIWVV). Over 38–48 (KLNPSLQTTTF) the chain is Cytoplasmic. A helical membrane pass occupies residues 49-72 (YFIVSLALADIAVGVLVMPLAIVI). Over 73-84 (SLGVTIHFYSCL) the chain is Extracellular. C83 and C165 are joined by a disulfide. A helical transmembrane segment spans residues 85–106 (FMTCLMLIFTHASIMSLLAIAV). The Cytoplasmic portion of the chain corresponds to 107–126 (DRYLRVKLTVRYRRVTTQRR). The chain crosses the membrane as a helical span at residues 127–148 (IWLALGLCWLVSFLVGLTPMFG). The Extracellular segment spans residues 149–176 (WNMKLSSADENLTFLPCRFRSVMRMDYM). Residue N159 is glycosylated (N-linked (GlcNAc...) asparagine). Residues 177–197 (VYFSFFLWILVPLVVMCAIYF) traverse the membrane as a helical segment. The Cytoplasmic segment spans residues 198 to 230 (DIFYIIRNRLSQSFSGSRETGAFYGREFKTAKS). Residues 231 to 254 (LLLVLFLFALCWLPLSIINCILYF) traverse the membrane as a helical segment. At 255–260 (DGQVPQ) the chain is on the extracellular side. The chain crosses the membrane as a helical span at residues 261–283 (TVLYLGILLSHANSMMNPIVYAY). Topologically, residues 284–317 (KIKKFKETYLLILKACVMCQPSKSMDPSTEQTSE) are cytoplasmic. C302 carries S-palmitoyl cysteine lipidation.

The protein belongs to the G-protein coupled receptor 1 family. Post-translationally, phosphorylation on Thr-315 and Ser-316 may be crucial for rapid desensitization. Phosphorylation on Thr-315 may be necessary for phosphorylation on Ser-316 to occur. Most abundant in lung, spleen and pineal gland. Moderate expression in brain, kidney and testis.

Its subcellular location is the cell membrane. Functionally, receptor for adenosine. The activity of this receptor is mediated by G proteins which inhibits adenylyl cyclase. The polypeptide is Adenosine receptor A3 (ADORA3) (Ovis aries (Sheep)).